We begin with the raw amino-acid sequence, 296 residues long: Elongation factor Ts (296 aa).

Residues 79 to 82 (TDFV) form an involved in Mg(2+) ion dislocation from EF-Tu region.

This sequence belongs to the EF-Ts family.

It is found in the cytoplasm. Functionally, associates with the EF-Tu.GDP complex and induces the exchange of GDP to GTP. It remains bound to the aminoacyl-tRNA.EF-Tu.GTP complex up to the GTP hydrolysis stage on the ribosome. The polypeptide is Elongation factor Ts (tsf) (Spiroplasma citri).